The sequence spans 584 residues: Kelch domain-containing protein 4 (584 aa).

A compositionally biased stretch (basic residues) spans 1–10 (MGKKGKKEKK). 2 disordered regions span residues 1 to 33 (MGKKGKKEKKGRGAEKTAAKMEKKVSKRSRKEE) and 50 to 69 (KTQVTETPCPPPSPRLNASL). Residues 11–24 (GRGAEKTAAKMEKK) show a composition bias toward basic and acidic residues. Kelch repeat units follow at residues 77-129 (ELIL…VVPQ), 133-187 (QLWV…AWKR), 188-238 (QLIL…LMAV), 243-289 (SIAI…INPS), and 308-361 (QILV…RRGK). 3 disordered regions span residues 348–381 (KGPKSEKKKRRRGKAEDPEGTTEQETGGSSAPEP), 405–433 (SGLGVQPSPKADDSASEASSTGQEPCPRS), and 482–533 (PKSQ…EQFE). At Ser-418 the chain carries Phosphoserine. Residues 443–494 (LLYVYGGMFEAGDRQVTLSDLYCLDLHKMEEWKTLVEMDPKSQEWLEESDSE) form a Kelch 6 repeat. The segment covering 487 to 519 (WLEESDSEEDSSSDEESEDGEDKDQEDSAEEGA) has biased composition (acidic residues). Residues 520 to 533 (DPQHPEVARGEQFE) are compositionally biased toward basic and acidic residues.

The chain is Kelch domain-containing protein 4 (Klhdc4) from Mus musculus (Mouse).